Reading from the N-terminus, the 310-residue chain is Olfactory receptor 2A1/2A42 (310 aa).

At 1 to 24 (MGENQTMVTEFLLLGFLLGPRIQM) the chain is on the extracellular side. Asn-4 carries N-linked (GlcNAc...) asparagine glycosylation. A helical transmembrane segment spans residues 25-48 (LLFGLFSLFYIFTLLGNGAILGLI). Residues 49 to 56 (SLDSRLHT) are Cytoplasmic-facing. A helical membrane pass occupies residues 57 to 78 (PMYFFLSHLAVVDIAYTRNTVP). Residues 79–99 (QMLANLLHPAKPISFAGCMTQ) are Extracellular-facing. Cysteines 96 and 188 form a disulfide. The chain crosses the membrane as a helical span at residues 100-119 (TFLCLSFGHSECLLLVLMSY). The Cytoplasmic portion of the chain corresponds to 120-138 (DRYVAICHPLRYSVIMTWR). A helical transmembrane segment spans residues 139-157 (VCITLAVTSWTCGSLLALA). Residues 158-195 (HVVLILRLPFSGPHEINHFFCEILSVLRLACADTWLNQ) lie on the Extracellular side of the membrane. A helical transmembrane segment spans residues 196-218 (VVIFAACVFFLVGPPSLVLVSYS). Residues 219 to 235 (HILAAILRIQSGEGRRK) lie on the Cytoplasmic side of the membrane. The helical transmembrane segment at 236–258 (AFSTCSSHLCVVGLFFGSAIIMY) threads the bilayer. The Extracellular portion of the chain corresponds to 259–271 (MAPKSRHPEEQQK). Residues 272–291 (VFFLFYSFFNPTLNPLIYSL) form a helical membrane-spanning segment. At 292 to 310 (RNGEVKGALRRALGKESHS) the chain is on the cytoplasmic side.

It belongs to the G-protein coupled receptor 1 family.

The protein resides in the cell membrane. Its function is as follows. Odorant receptor. The chain is Olfactory receptor 2A1/2A42 (OR2A1) from Homo sapiens (Human).